The following is a 71-amino-acid chain: Conotoxin De13.1 (71 aa).

The first 19 residues, 1–19, serve as a signal peptide directing secretion; the sequence is MSGMGVLLLVLLLVMPLAA. A propeptide spanning residues 20-35 is cleaved from the precursor; the sequence is FHQDGEGEATRRSGGL. Residues Pro-40 and Pro-44 each carry the 4-hydroxyproline modification. Trp-51 carries the 6'-bromotryptophan modification. Glu-52 carries the post-translational modification 4-carboxyglutamate. Lys-55 carries the 5-hydroxylysine modification. At Pro-58 the chain carries 4-hydroxyproline. His-69 is modified (histidine amide).

The protein belongs to the conotoxin G superfamily. In terms of processing, contains 4 disulfide bonds. In terms of tissue distribution, expressed by the venom duct.

Its subcellular location is the secreted. The protein is Conotoxin De13.1 of Conasprella delessertii (Sozon's cone).